We begin with the raw amino-acid sequence, 397 residues long: Elongation factor Tu (397 aa).

One can recognise a tr-type G domain in the interval 10–206; sequence KPHVNIGTIG…AVDSYIPTPE (197 aa). A G1 region spans residues 19 to 26; it reads GHVDHGKT. 19-26 is a GTP binding site; it reads GHVDHGKT. T26 contributes to the Mg(2+) binding site. The tract at residues 60–64 is G2; the sequence is GITIN. Positions 81 to 84 are G3; sequence DCPG. Residues 81–85 and 136–139 each bind GTP; these read DCPGH and NKAD. The tract at residues 136–139 is G4; sequence NKAD. Positions 174–176 are G5; it reads SAL.

It belongs to the TRAFAC class translation factor GTPase superfamily. Classic translation factor GTPase family. EF-Tu/EF-1A subfamily. Monomer.

The protein resides in the cytoplasm. The catalysed reaction is GTP + H2O = GDP + phosphate + H(+). In terms of biological role, GTP hydrolase that promotes the GTP-dependent binding of aminoacyl-tRNA to the A-site of ribosomes during protein biosynthesis. The protein is Elongation factor Tu of Clostridium beijerinckii (strain ATCC 51743 / NCIMB 8052) (Clostridium acetobutylicum).